The chain runs to 269 residues: Small ribosomal subunit protein uS3 (269 aa).

Residues 38–106 (IREWLHKNLE…QIQLNILEVK (69 aa)) form the KH type-2 domain. Positions 215-269 (AQKAARQAAQGGRGGRGGNRRGRGDRPDRRGGRRRAEAAKQSAETPAPQTENAGA) are disordered. The segment covering 236–252 (GRGDRPDRRGGRRRAEA) has biased composition (basic and acidic residues). Positions 256–269 (SAETPAPQTENAGA) are enriched in polar residues.

The protein belongs to the universal ribosomal protein uS3 family. As to quaternary structure, part of the 30S ribosomal subunit. Forms a tight complex with proteins S10 and S14.

In terms of biological role, binds the lower part of the 30S subunit head. Binds mRNA in the 70S ribosome, positioning it for translation. The polypeptide is Small ribosomal subunit protein uS3 (Cutibacterium acnes (strain DSM 16379 / KPA171202) (Propionibacterium acnes)).